We begin with the raw amino-acid sequence, 154 residues long: Resuscitation-promoting factor RpfD (154 aa).

A helical membrane pass occupies residues 21 to 41 (IVCTVFIETAVVATMFVALLG).

The protein belongs to the transglycosylase family. Rpf subfamily.

It is found in the cell membrane. Functionally, factor that stimulates resuscitation of dormant cells. Has peptidoglycan (PG) hydrolytic activity. PG fragments could either directly activate the resuscitation pathway of dormant bacteria or serve as a substrate for endogenous Rpf, resulting in low molecular weight products with resuscitation activity. This is Resuscitation-promoting factor RpfD (rpfD) from Mycobacterium tuberculosis (strain CDC 1551 / Oshkosh).